The following is a 2104-amino-acid chain: Replication polyprotein (2104 aa).

The next 2 helical transmembrane spans lie at 23-43 (LVAS…FASS) and 70-90 (FNPF…YAFI). A coiled-coil region spans residues 289–313 (VRVGEIREKVATLRNKLNTLQTKEL). Residues 329–501 (LEVLLIEVKV…NKMPKRGAID (173 aa)) enclose the SF3 helicase domain. The segment at 1499–1520 (GDCGSPIVLASGKKAGKLIGFH) is viral peptidase. Residues 1838–1965 (PNYFDADYKN…SVSDEYKDKY (128 aa)) enclose the RdRp catalytic domain.

In terms of processing, specific enzymatic cleavages in vivo yield mature proteins.

It is found in the membrane. It catalyses the reaction RNA(n) + a ribonucleoside 5'-triphosphate = RNA(n+1) + diphosphate. Its function is as follows. The peptidase activity is involved in polyprotein maturation, possibly along with hosts proteases. Transmembrane protein may be surface viral glycoprotein. RNA-directed RNA polymerase replicates the viral genome. The chain is Replication polyprotein from Drosophila melanogaster (Fruit fly).